A 294-amino-acid polypeptide reads, in one-letter code: Homeobox protein Nkx-2.5 (294 aa).

2 disordered regions span residues 48–69 (GSEPPALPELPEPPPAKPPAAF) and 102–122 (EQEKRELEDPERPRQRKRRKP). Over residues 52–69 (PALPELPEPPPAKPPAAF) the composition is skewed to pro residues. Residues 102 to 114 (EQEKRELEDPERP) show a composition bias toward basic and acidic residues. A DNA-binding region (homeobox) is located at residues 119–178 (RRKPRVLFSQAQVYELERRFKQQKYLSAPERDHLANVLKLTSTQVKIWFQNRRYKCKRQR).

Belongs to the NK-2 homeobox family. As to quaternary structure, homodimer (via the homeobox); binds DNA as homodimer.

The protein localises to the nucleus. Functionally, transcription factor required for the development of the heart and the spleen. Implicated in commitment to and/or differentiation of the myocardial lineage. Binds to the core DNA motif of promoter. The chain is Homeobox protein Nkx-2.5 (NKX-2.5) from Gallus gallus (Chicken).